The chain runs to 312 residues: tRNA uridine(34) hydroxylase (312 aa).

The Rhodanese domain maps to 123–217; the sequence is SDPEVLLIDT…YLEEVPQEQS (95 aa). The active-site Cysteine persulfide intermediate is C177. A compositionally biased stretch (basic and acidic residues) spans 282-293; it reads ARERQKQIELAR. Positions 282-312 are disordered; the sequence is ARERQKQIELARQRNQPHPLGRDPRQSTLEN.

The protein belongs to the TrhO family.

The enzyme catalyses uridine(34) in tRNA + AH2 + O2 = 5-hydroxyuridine(34) in tRNA + A + H2O. Catalyzes oxygen-dependent 5-hydroxyuridine (ho5U) modification at position 34 in tRNAs. The chain is tRNA uridine(34) hydroxylase from Pseudomonas paraeruginosa (strain DSM 24068 / PA7) (Pseudomonas aeruginosa (strain PA7)).